Here is a 144-residue protein sequence, read N- to C-terminus: Prefoldin subunit alpha (144 aa).

The protein belongs to the prefoldin alpha subunit family. Heterohexamer of two alpha and four beta subunits.

Its subcellular location is the cytoplasm. Molecular chaperone capable of stabilizing a range of proteins. Seems to fulfill an ATP-independent, HSP70-like function in archaeal de novo protein folding. This is Prefoldin subunit alpha from Methanococcus aeolicus (strain ATCC BAA-1280 / DSM 17508 / OCM 812 / Nankai-3).